Reading from the N-terminus, the 302-residue chain is G-protein coupled receptor A5 (302 aa).

The Extracellular segment spans residues 1 to 20 (MADSSNSSLNCTAIHDQTVL). A helical transmembrane segment spans residues 21–41 (ILGQVFNSVWLFISVIFLYIF). At 42–50 (ACKLCFRPR) the chain is on the cytoplasmic side. A helical membrane pass occupies residues 51–71 (IYLWLSFYTLGFMLWVLCKVL). The Extracellular portion of the chain corresponds to 72-81 (QEYVTGKFKC). A helical transmembrane segment spans residues 82–102 (VITNCIGDFCLVFLSCIMLGI). The Cytoplasmic portion of the chain corresponds to 103-122 (MLDRYLKIQGTLRGGMKDIH). A helical transmembrane segment spans residues 123-143 (IGIFVSASCFGSLMIALLDGL). Residues 144–173 (HMGDSEKLQFNGTESFKCLPATSVSSYKAQ) lie on the Extracellular side of the membrane. The chain crosses the membrane as a helical span at residues 174-194 (LMFKSIFCIICIIMCLILTCL). The Cytoplasmic portion of the chain corresponds to 195-208 (TAKKVLGTRLRKKY). The chain crosses the membrane as a helical span at residues 209–229 (VIVGNVGLLSFVNILLWVMIA). At 230–249 (CGLLKQALESNLSLCPTKQS) the chain is on the extracellular side. A helical transmembrane segment spans residues 250-270 (TYIYPYTMPVTVIFVLVIYLF). At 271–302 (SSTHMKNAMRKSGQIRHSLSSPNQVQSSFRLV) the chain is on the cytoplasmic side.

This sequence belongs to the G-protein coupled receptor 1 family.

The protein resides in the host cell membrane. The protein localises to the host endoplasmic reticulum membrane. Acts as a viral G-protein coupled receptor that constitutively activates host alphai-type G-proteins, thereby inhibiting host forskolin-triggered CREB activation. In Connochaetes taurinus (Blue wildebeest), this protein is G-protein coupled receptor A5 (A5).